Here is a 189-residue protein sequence, read N- to C-terminus: Ornithine decarboxylase antizyme 2 (189 aa).

S186 is modified (phosphoserine).

This sequence belongs to the ODC antizyme family. Interacts with ODC1 and thereby sterically blocks ODC homodimerization. Interacts with AZIN2; this interaction disrupts the interaction between the antizyme and ODC1.

Its subcellular location is the nucleus. Ornithine decarboxylase (ODC) antizyme protein that negatively regulates ODC activity and intracellular polyamine biosynthesis and uptake in response to increased intracellular polyamine levels. Binds to ODC monomers, inhibiting the assembly of the functional ODC homodimers. Does not target the ODC monomers for degradation, which allows a protein synthesis-independent restoration of ODC activity. Involved in the translocation of AZIN2 from ER-Golgi intermediate compartment (ERGIC) to the cytosol. This Mus musculus (Mouse) protein is Ornithine decarboxylase antizyme 2 (Oaz2).